A 500-amino-acid polypeptide reads, in one-letter code: MSYFPWLTILVVLPIFAGSLIFFLPHKGNKIVRWYTISICLLEFLLMTYAFCYHFQLEDPLIQLKEDYKWIDVFDFHWRLGIDGLSLGSILLTGFITTLATLAAWPITRNSRLFYFLMLAMYSGQIGLFSSRDLLLFFIMWELELIPVYLLLSMWGGKRRLYSATKFILYTAGGSIFFLIGVLGMGLYGSNEPGLDLERLINQSYPATLEILLYFGFLIAYAVKLPIIPLHTWLPDTHGEAHYSTCMLLAGILLKMGAYGLIRINMELLPHAHYLFSPWLVIIGAIQIIYAALTSLGQRNFKKRIAYSSVSHMGFIIIGIGSITNIGLNGAILQILSHGFIGATLFFLAGTASDRMRLVYLEELGGISIPMPKIFTMFSSFSMASLALPGMSGFVAELVVFFGLITSPKFLLMPKALITFVMAIGMILTPIYLLSMLRQMFYGYKLFNVPNANFVDSGPRELFILICIFLPVIGIGIYPDFVLSLSVDRVEALLSNYYPK.

Transmembrane regions (helical) follow at residues 4 to 24, 37 to 57, 87 to 107, 113 to 130, 134 to 154, 167 to 187, 211 to 231, 242 to 262, 274 to 294, 313 to 333, 334 to 354, 386 to 406, 417 to 437, and 462 to 482; these read FPWLTILVVLPIFAGSLIFFL, ISICLLEFLLMTYAFCYHFQL, LGSILLTGFITTLATLAAWPI, LFYFLMLAMYSGQIGLFS, LLLFFIMWELELIPVYLLLSM, FILYTAGGSIFFLIGVLGMGL, ILLYFGFLIAYAVKLPIIPLH, HYSTCMLLAGILLKMGAYGLI, YLFSPWLVIIGAIQIIYAALT, MGFIIIGIGSITNIGLNGAIL, QILSHGFIGATLFFLAGTASD, LALPGMSGFVAELVVFFGLIT, LITFVMAIGMILTPIYLLSML, and LFILICIFLPVIGIGIYPDFV.

This sequence belongs to the complex I subunit 4 family.

The protein localises to the plastid. It is found in the chloroplast thylakoid membrane. It catalyses the reaction a plastoquinone + NADH + (n+1) H(+)(in) = a plastoquinol + NAD(+) + n H(+)(out). It carries out the reaction a plastoquinone + NADPH + (n+1) H(+)(in) = a plastoquinol + NADP(+) + n H(+)(out). This is NAD(P)H-quinone oxidoreductase chain 4, chloroplastic (ndhD) from Hordeum vulgare (Barley).